The primary structure comprises 162 residues: Anaerobic nitrite reductase NSHB2 (162 aa).

Residues 16–159 (SFSEEQEALV…LVAAIKQEMK (144 aa)) form the Globin domain. The short motif at 49–53 (EVAPS) is the Homodimerization element. Residues Ser-59, Lys-73, His-77, Arg-100, Thr-104, and His-105 each coordinate heme b. The short motif at 112 to 124 (DAHFEVTRFALLE) is the Homodimerization element.

It belongs to the plant globin family. As to quaternary structure, homodimer. Heme b is required as a cofactor. As to expression, mainly expressed in germinating seeds, seedlings, roots, flowers and leaves.

The protein localises to the cytoplasm. Its subcellular location is the nucleus. It carries out the reaction Fe(III)-heme b-[protein] + nitric oxide + H2O = Fe(II)-heme b-[protein] + nitrite + 2 H(+). In terms of biological role, phytoglobin that reduces nitrite to nitric oxide under anoxic conditions (e.g. during flooding or in waterlogged soil). May not function as an oxygen storage or transport protein. Has an unusually high affinity for O(2) through an hexacoordinate heme iron because of a very low dissociation constant. Promotes tolerance to low potassium K(+) conditions. The chain is Anaerobic nitrite reductase NSHB2 from Oryza sativa subsp. indica (Rice).